The primary structure comprises 355 residues: Fructose-1,6-bisphosphatase class 1 (355 aa).

4 residues coordinate Mg(2+): glutamate 90, aspartate 109, leucine 111, and aspartate 112. Residues aspartate 112 to serine 115, asparagine 204, and tyrosine 256 to tyrosine 258 each bind substrate. Glutamate 276 is a binding site for Mg(2+).

This sequence belongs to the FBPase class 1 family. In terms of assembly, homotetramer. Requires Mg(2+) as cofactor.

The protein resides in the cytoplasm. It catalyses the reaction beta-D-fructose 1,6-bisphosphate + H2O = beta-D-fructose 6-phosphate + phosphate. It functions in the pathway carbohydrate biosynthesis; gluconeogenesis. The polypeptide is Fructose-1,6-bisphosphatase class 1 (Acidiphilium cryptum (strain JF-5)).